We begin with the raw amino-acid sequence, 55 residues long: Neurotoxin B-IV (55 aa).

A Hydroxyproline modification is found at P10. Cystine bridges form between C12-C52, C16-C48, C23-C41, and C26-C37.

Belongs to the worm B-toxin family.

Its subcellular location is the secreted. Functionally, this toxin increases the excitability of nerves by delaying the inactivation of the voltage-gated sodium channel (Nav). Only acts on some crustacean. Is more abundant, but 15-fold less toxic than neurotoxin B-II. The polypeptide is Neurotoxin B-IV (Cerebratulus lacteus (Milky ribbon worm)).